A 395-amino-acid chain; its full sequence is uncharacterized protein (395 aa).

It belongs to the UDP-glycosyltransferase family.

This is an uncharacterized protein from Bacillus subtilis (strain 168).